Here is a 148-residue protein sequence, read N- to C-terminus: Lysozyme C (148 aa).

The signal sequence occupies residues 1–18; it reads MKALLLLGLLLLSVTVQG. Residues 19 to 148 form the C-type lysozyme domain; the sequence is KIFERCDLAR…VSQYVRNCGV (130 aa). Intrachain disulfides connect C24/C146, C48/C134, C83/C99, and C95/C113. Active-site residues include E53 and D71.

Belongs to the glycosyl hydrolase 22 family. As to quaternary structure, monomer.

It carries out the reaction Hydrolysis of (1-&gt;4)-beta-linkages between N-acetylmuramic acid and N-acetyl-D-glucosamine residues in a peptidoglycan and between N-acetyl-D-glucosamine residues in chitodextrins.. In terms of biological role, lysozymes have primarily a bacteriolytic function; those in tissues and body fluids are associated with the monocyte-macrophage system and enhance the activity of immunoagents. The protein is Lysozyme C (LYZ) of Halichoerus grypus (Gray seal).